A 576-amino-acid chain; its full sequence is Glucoamylase ARB_02327-1 (576 aa).

A signal peptide spans 1-20; it reads MGLASTVSLALLGLCSLARA. Trp141 contacts substrate. 2 N-linked (GlcNAc...) asparagine glycosylation sites follow: Asn168 and Asn192. Asp197 acts as the Proton acceptor in catalysis. Glu200 acts as the Proton donor in catalysis. Cystine bridges form between Cys243–Cys470 and Cys285–Cys293. Positions 477–576 constitute a CBM20 domain; it reads GSGGDTVAVT…GSFTQNDTWR (100 aa). The segment at 552 to 576 is disordered; that stretch reads TWESDPNRSITTSASGSFTQNDTWR. N-linked (GlcNAc...) asparagine glycans are attached at residues Asn558 and Asn572.

This sequence belongs to the glycosyl hydrolase 15 family.

The protein localises to the secreted. It carries out the reaction Hydrolysis of terminal (1-&gt;4)-linked alpha-D-glucose residues successively from non-reducing ends of the chains with release of beta-D-glucose.. The polypeptide is Glucoamylase ARB_02327-1 (Schizophyllum commune (strain H4-8 / FGSC 9210) (Split gill fungus)).